Reading from the N-terminus, the 132-residue chain is Large ribosomal subunit protein bL17 (132 aa).

It belongs to the bacterial ribosomal protein bL17 family. Part of the 50S ribosomal subunit. Contacts protein L32.

The chain is Large ribosomal subunit protein bL17 from Cellvibrio japonicus (strain Ueda107) (Pseudomonas fluorescens subsp. cellulosa).